The chain runs to 59 residues: Single-pass membrane and coiled-coil domain-containing protein 4 homolog (59 aa).

Residues 1-11 show a composition bias toward basic residues; it reads MAGRNKAKPRL. Residues 1-20 are disordered; it reads MAGRNKAKPRLSKKEKEERR. Positions 10 to 30 form a coiled coil; sequence RLSKKEKEERRKDMAEVQEKV. The chain crosses the membrane as a helical span at residues 30–50; that stretch reads VFSVVVPVVVAFTVVIMLIVY.

This sequence belongs to the SMCO4 family.

The protein localises to the membrane. This is Single-pass membrane and coiled-coil domain-containing protein 4 homolog from Argas monolakensis (Mono lake bird tick).